The following is a 224-amino-acid chain: PKHD-type hydroxylase SO_3913 (224 aa).

One can recognise a Fe2OG dioxygenase domain in the interval 78–176; it reads QFYPPLFNRY…RTSAFMWLQS (99 aa). H96, D98, and H157 together coordinate Fe cation. R167 contributes to the 2-oxoglutarate binding site.

The cofactor is Fe(2+). It depends on L-ascorbate as a cofactor.

This chain is PKHD-type hydroxylase SO_3913, found in Shewanella oneidensis (strain ATCC 700550 / JCM 31522 / CIP 106686 / LMG 19005 / NCIMB 14063 / MR-1).